Consider the following 382-residue polypeptide: Lipid-A-disaccharide synthase (382 aa).

This sequence belongs to the LpxB family.

It carries out the reaction 2-N,3-O-bis[(3R)-3-hydroxytetradecanoyl]-alpha-D-glucosaminyl 1-phosphate + UDP-2-N,3-O-bis[(3R)-3-hydroxytetradecanoyl]-alpha-D-glucosamine = lipid A disaccharide (E. coli) + UDP + H(+). The catalysed reaction is a lipid X + a UDP-2-N,3-O-bis[(3R)-3-hydroxyacyl]-alpha-D-glucosamine = a lipid A disaccharide + UDP + H(+). It participates in glycolipid biosynthesis; lipid IV(A) biosynthesis; lipid IV(A) from (3R)-3-hydroxytetradecanoyl-[acyl-carrier-protein] and UDP-N-acetyl-alpha-D-glucosamine: step 5/6. In terms of biological role, condensation of UDP-2,3-diacylglucosamine and 2,3-diacylglucosamine-1-phosphate to form lipid A disaccharide, a precursor of lipid A, a phosphorylated glycolipid that anchors the lipopolysaccharide to the outer membrane of the cell. This is Lipid-A-disaccharide synthase from Escherichia coli O17:K52:H18 (strain UMN026 / ExPEC).